A 440-amino-acid polypeptide reads, in one-letter code: Thymidine phosphorylase (440 aa).

It belongs to the thymidine/pyrimidine-nucleoside phosphorylase family. Homodimer.

The catalysed reaction is thymidine + phosphate = 2-deoxy-alpha-D-ribose 1-phosphate + thymine. It participates in pyrimidine metabolism; dTMP biosynthesis via salvage pathway; dTMP from thymine: step 1/2. Functionally, the enzymes which catalyze the reversible phosphorolysis of pyrimidine nucleosides are involved in the degradation of these compounds and in their utilization as carbon and energy sources, or in the rescue of pyrimidine bases for nucleotide synthesis. This chain is Thymidine phosphorylase, found in Cronobacter sakazakii (strain ATCC BAA-894) (Enterobacter sakazakii).